We begin with the raw amino-acid sequence, 233 residues long: Large ribosomal subunit protein uL1 (233 aa).

It belongs to the universal ribosomal protein uL1 family. As to quaternary structure, part of the 50S ribosomal subunit.

Its function is as follows. Binds directly to 23S rRNA. The L1 stalk is quite mobile in the ribosome, and is involved in E site tRNA release. Protein L1 is also a translational repressor protein, it controls the translation of the L11 operon by binding to its mRNA. This chain is Large ribosomal subunit protein uL1, found in Thermotoga petrophila (strain ATCC BAA-488 / DSM 13995 / JCM 10881 / RKU-1).